The following is a 324-amino-acid chain: Germ cell-specific gene 1 protein (324 aa).

Transmembrane regions (helical) follow at residues 15–35 (TFIS…SLLS), 127–147 (LSLG…LLLL), 164–184 (AFAA…HMLY), and 208–228 (WAFY…VTTF).

Belongs to the GSG1 family. In terms of assembly, interacts with PAPOLB. As to expression, expressed in spermatogenic cells (at protein level). Expressed in germ cells within the testis from day 21 onwards.

The protein resides in the endoplasmic reticulum membrane. May cause the redistribution of PAPOLB from the cytosol to the endoplasmic reticulum. This is Germ cell-specific gene 1 protein (Gsg1) from Mus musculus (Mouse).